Here is a 231-residue protein sequence, read N- to C-terminus: Lecithin retinol acyltransferase (231 aa).

Residues 1–194 are Cytoplasmic-facing; that stretch reads MKNPMLEAAS…VKIIIRDQRS (194 aa). An LRAT domain is found at 50–177; the sequence is VLEVSRTHFI…CRYGSRISPQ (128 aa). Catalysis depends on residues His60 and His72. Cys161 functions as the Acyl-thioester intermediate in the catalytic mechanism. The chain crosses the membrane as a helical span at residues 195 to 215; that stretch reads SLASAVLGLASIVYTGLASYM. Residues 216 to 231 lie on the Lumenal side of the membrane; the sequence is TLPAICIPFCLWMMSG.

Belongs to the H-rev107 family. Hepatic stellate cells and endothelial cells (at protein level).

It is found in the endoplasmic reticulum membrane. The protein localises to the rough endoplasmic reticulum. The protein resides in the endosome. Its subcellular location is the multivesicular body. It localises to the cytoplasm. It is found in the perinuclear region. The enzyme catalyses all-trans-retinol--[retinol-binding protein] + a 1,2-diacyl-sn-glycero-3-phosphocholine = apo--[retinol-binding protein] + an all-trans-retinyl ester + a 2-acyl-sn-glycero-3-phosphocholine. The catalysed reaction is 1,2-diheptanoyl-sn-glycero-3-phosphocholine + all-trans-retinol--[retinol-binding protein] = all-trans-retinyl heptanoate + 2-heptanoyl-sn-glycero-3-phosphocholine + apo--[retinol-binding protein]. It carries out the reaction 1,2-dioctanoyl-sn-glycero-3-phosphocholine + all-trans-retinol--[retinol-binding protein] = 2-octanoyl-sn-glycero-3-phosphocholine + all-trans-retinyl octanoate + apo--[retinol-binding protein]. It catalyses the reaction all-trans-retinol--[retinol-binding protein] + 1,2-dihexadecanoyl-sn-glycero-3-phosphocholine = apo--[retinol-binding protein] + all-trans-retinyl hexadecanoate + 2-hexadecanoyl-sn-glycero-3-phosphocholine. The enzyme catalyses 1,2-didodecanoyl-sn-glycero-3-phosphocholine + all-trans-retinol--[retinol-binding protein] = 2-dodecanoyl-sn-glycero-3-phosphocholine + all-trans-retinyl dodecanoate + apo--[retinol-binding protein]. The catalysed reaction is 1,2-dihexadecanoyl-sn-glycero-3-phosphocholine + all-trans-retinol = all-trans-retinyl hexadecanoate + 2-hexadecanoyl-sn-glycero-3-phosphocholine. It functions in the pathway cofactor metabolism; retinol metabolism. With respect to regulation, inhibited by all-trans-retinyl alpha-bromoacetate and N-boc-L-biocytinyl-11-aminoundecane chloro-methyl ketone (BACMK). Functionally, transfers the acyl group from the sn-1 position of phosphatidylcholine to all-trans retinol, producing all-trans retinyl esters. Retinyl esters are storage forms of vitamin A. LRAT plays a critical role in vision. It provides the all-trans retinyl ester substrates for the isomerohydrolase which processes the esters into 11-cis-retinol in the retinal pigment epithelium; due to a membrane-associated alcohol dehydrogenase, 11 cis-retinol is oxidized and converted into 11-cis-retinaldehyde which is the chromophore for rhodopsin and the cone photopigments. Required for the survival of cone photoreceptors and correct rod photoreceptor cell morphology. The polypeptide is Lecithin retinol acyltransferase (Lrat) (Mus musculus (Mouse)).